The chain runs to 260 residues: Acyl-coenzyme A diphosphatase FITM2 (260 aa).

The Cytoplasmic segment spans residues 1–23 (MERLENCAQMFQRRFLNESFRRH). The chain crosses the membrane as a helical span at residues 24 to 44 (CPVLLACIVLGGSLLKELCPL). At 45–57 (PDSYWNNKRNVLN) the chain is on the lumenal side. A helical membrane pass occupies residues 58 to 78 (VYFVKFSWGWTLWLLLPFIAL). At 79 to 93 (TNYKLTRSTTKVLRR) the chain is on the cytoplasmic side. The helical transmembrane segment at 94–114 (LSSLLVSTLIWYLCTNLFLYI) threads the bilayer. Residues 115-145 (ENITGSCYESEAMSDPKEHQDRRECRLHSGY) are Lumenal-facing. A helical membrane pass occupies residues 146 to 166 (WHGFDISGHCFLLSYCILLIL). Residue histidine 154 is part of the active site. Topologically, residues 167–189 (EETSIISNIRFERHWHRMAINAQ) are cytoplasmic. The next 2 membrane-spanning stretches (helical) occupy residues 190–210 (FAAL…TAVY) and 211–231 (FHNI…WYIT). The active site involves histidine 212. Residues 232-260 (YRWWYLQPISPGLPPASASRSGKEPIYRN) lie on the Cytoplasmic side of the membrane.

Belongs to the FIT family. FIT2 subfamily.

It is found in the endoplasmic reticulum membrane. It catalyses the reaction an acyl-CoA + H2O = an acyl-4'-phosphopantetheine + adenosine 3',5'-bisphosphate + 2 H(+). Fatty acyl-coenzyme A (CoA) diphosphatase that hydrolyzes fatty acyl-CoA to yield acyl-4'-phosphopantetheine and adenosine 3',5'-bisphosphate. Preferentially hydrolyzes unsaturated long-chain acyl-CoA substrates in the endoplasmic reticulum (ER) lumen. This catalytic activity is required for maintaining ER structure and for lipid droplets (LDs) biogenesis, which are lipid storage organelles involved in maintaining lipid and energy homeostasis. May directly bind to diacylglycerol (DAGs) and triacylglycerol, which is also important for LD biogenesis. May support directional budding of nacent LDs from the ER into the cytosol by reducing DAG levels at sites of LD formation. May play a role in the regulation of cell morphology, ER morphology and cytoskeletal organization. The protein is Acyl-coenzyme A diphosphatase FITM2 of Xenopus tropicalis (Western clawed frog).